The sequence spans 803 residues: Cation channel sperm-associated auxiliary subunit delta (803 aa).

A signal peptide spans 1-15 (MLMLMLAAVATVVRA). At 16–720 (QTVCRFRTVR…ALPVAEFRPM (705 aa)) the chain is on the extracellular side. 7 disulfides stabilise this stretch: cysteine 19-cysteine 365, cysteine 55-cysteine 142, cysteine 141-cysteine 148, cysteine 383-cysteine 492, cysteine 506-cysteine 698, cysteine 521-cysteine 568, and cysteine 620-cysteine 648. 7 N-linked (GlcNAc...) asparagine glycosylation sites follow: asparagine 226, asparagine 418, asparagine 436, asparagine 468, asparagine 534, asparagine 545, and asparagine 626. A helical membrane pass occupies residues 721 to 742 (TSILLMVTVTLFTMWLAYAIPK). Residues 743–803 (QLRTERGRRL…QIGKKPDIKK (61 aa)) are Cytoplasmic-facing. Residues 782–803 (SRRVKDQPEKIPQIGKKPDIKK) are disordered.

The protein belongs to the CATSPERD family. In terms of assembly, component of the CatSper complex or CatSpermasome composed of the core pore-forming members CATSPER1, CATSPER2, CATSPER3 and CATSPER4 as well as auxiliary members CATSPERB, CATSPERG, CATSPERD, CATSPERE, CATSPERZ, C2CD6/CATSPERT, SLCO6C1, TMEM249, TMEM262 and EFCAB9. HSPA1 may be an additional auxiliary complex member. The core complex members CATSPER1, CATSPER2, CATSPER3 and CATSPER4 form a heterotetrameric channel. The auxiliary CATSPERB, CATSPERG, CATSPERD and CATSPERE subunits form a pavilion-like structure over the pore which stabilizes the complex through interactions with CATSPER4, CATSPER3, CATSPER1 and CATSPER2 respectively. SLCO6C1 interacts with CATSPERE and TMEM262/CATSPERH interacts with CATSPERB, further stabilizing the complex. C2CD6/CATSPERT interacts at least with CATSPERD and is required for targeting the CatSper complex in the flagellar membrane.

It is found in the cell projection. Its subcellular location is the cilium. The protein localises to the flagellum membrane. Functionally, auxiliary component of the CatSper complex, a complex involved in sperm cell hyperactivation. Sperm cell hyperactivation is needed for sperm motility which is essential late in the preparation of sperm for fertilization. Required for CATSPER1 stability before intraflagellar transport and/or incorporation of the CatSper complex channel into the flagellar membrane. In Rattus norvegicus (Rat), this protein is Cation channel sperm-associated auxiliary subunit delta.